The chain runs to 296 residues: Ribosomal RNA small subunit methyltransferase H (296 aa).

Residues 30 to 32 (GGH), Asp49, Phe76, Asp97, and Gln104 contribute to the S-adenosyl-L-methionine site.

Belongs to the methyltransferase superfamily. RsmH family.

It localises to the cytoplasm. It carries out the reaction cytidine(1402) in 16S rRNA + S-adenosyl-L-methionine = N(4)-methylcytidine(1402) in 16S rRNA + S-adenosyl-L-homocysteine + H(+). Specifically methylates the N4 position of cytidine in position 1402 (C1402) of 16S rRNA. This chain is Ribosomal RNA small subunit methyltransferase H, found in Mesomycoplasma hyopneumoniae (strain 7448) (Mycoplasma hyopneumoniae).